The sequence spans 84 residues: Sulfur carrier protein TusA (84 aa).

Residue cysteine 19 is the Cysteine persulfide intermediate of the active site.

This sequence belongs to the sulfur carrier protein TusA family. In terms of assembly, interacts with IscS.

The protein resides in the cytoplasm. The protein operates within tRNA modification. Sulfur carrier protein involved in sulfur trafficking in the cell. Part of a sulfur-relay system required for 2-thiolation during synthesis of 2-thiouridine of the modified wobble base 5-methylaminomethyl-2-thiouridine (mnm(5)s(2)U) in tRNA. Interacts with IscS and stimulates its cysteine desulfurase activity. Accepts an activated sulfur from IscS, which is then transferred to TusD, and thus determines the direction of sulfur flow from IscS to 2-thiouridine formation. Also appears to be involved in sulfur transfer for the biosynthesis of molybdopterin. This is Sulfur carrier protein TusA from Proteus mirabilis (strain HI4320).